The sequence spans 271 residues: 4-hydroxy-tetrahydrodipicolinate reductase (271 aa).

NAD(+) is bound by residues 10–15 (GAGGRM), Glu36, 100–102 (GTT), and 124–127 (SGNM). Residue His157 is the Proton donor/acceptor of the active site. His158 is a (S)-2,3,4,5-tetrahydrodipicolinate binding site. Lys161 acts as the Proton donor in catalysis. Residue 167 to 168 (GT) coordinates (S)-2,3,4,5-tetrahydrodipicolinate.

The protein belongs to the DapB family.

It localises to the cytoplasm. The catalysed reaction is (S)-2,3,4,5-tetrahydrodipicolinate + NAD(+) + H2O = (2S,4S)-4-hydroxy-2,3,4,5-tetrahydrodipicolinate + NADH + H(+). The enzyme catalyses (S)-2,3,4,5-tetrahydrodipicolinate + NADP(+) + H2O = (2S,4S)-4-hydroxy-2,3,4,5-tetrahydrodipicolinate + NADPH + H(+). Its pathway is amino-acid biosynthesis; L-lysine biosynthesis via DAP pathway; (S)-tetrahydrodipicolinate from L-aspartate: step 4/4. Catalyzes the conversion of 4-hydroxy-tetrahydrodipicolinate (HTPA) to tetrahydrodipicolinate. This chain is 4-hydroxy-tetrahydrodipicolinate reductase, found in Rhodopseudomonas palustris (strain ATCC BAA-98 / CGA009).